The primary structure comprises 246 residues: Probable transcriptional regulatory protein APJL_1171 (246 aa).

Belongs to the TACO1 family.

The protein resides in the cytoplasm. The sequence is that of Probable transcriptional regulatory protein APJL_1171 from Actinobacillus pleuropneumoniae serotype 3 (strain JL03).